The sequence spans 424 residues: Phosphomethylpyrimidine synthase 2 (424 aa).

Substrate is bound by residues Asn65, Met94, Tyr123, His162, 184-186 (SRG), 225-228 (DGLR), and Glu264. His268 contributes to the Zn(2+) binding site. Tyr291 is a substrate binding site. His332 serves as a coordination point for Zn(2+). Residues Cys408, Cys411, and Cys415 each coordinate [4Fe-4S] cluster.

Belongs to the ThiC family. [4Fe-4S] cluster is required as a cofactor.

It carries out the reaction 5-amino-1-(5-phospho-beta-D-ribosyl)imidazole + S-adenosyl-L-methionine = 4-amino-2-methyl-5-(phosphooxymethyl)pyrimidine + CO + 5'-deoxyadenosine + formate + L-methionine + 3 H(+). Its pathway is cofactor biosynthesis; thiamine diphosphate biosynthesis. Functionally, catalyzes the synthesis of the hydroxymethylpyrimidine phosphate (HMP-P) moiety of thiamine from aminoimidazole ribotide (AIR) in a radical S-adenosyl-L-methionine (SAM)-dependent reaction. The sequence is that of Phosphomethylpyrimidine synthase 2 from Methanothermobacter thermautotrophicus (strain ATCC 29096 / DSM 1053 / JCM 10044 / NBRC 100330 / Delta H) (Methanobacterium thermoautotrophicum).